The primary structure comprises 508 residues: GMP synthase [glutamine-hydrolyzing] (508 aa).

In terms of domain architecture, Glutamine amidotransferase type-1 spans 1–189 (MILVLDFGSQ…ALLVCGCEKT (189 aa)). Catalysis depends on Cys-78, which acts as the Nucleophile. Catalysis depends on residues His-163 and Glu-165. The region spanning 190 to 383 (WGMQHFAQRE…LGVSQDFLMR (194 aa)) is the GMPS ATP-PPase domain. Residue 217–223 (SGGVDST) coordinates ATP.

In terms of assembly, homodimer.

It catalyses the reaction XMP + L-glutamine + ATP + H2O = GMP + L-glutamate + AMP + diphosphate + 2 H(+). Its pathway is purine metabolism; GMP biosynthesis; GMP from XMP (L-Gln route): step 1/1. Functionally, catalyzes the synthesis of GMP from XMP. The sequence is that of GMP synthase [glutamine-hydrolyzing] (guaA) from Helicobacter pylori (strain ATCC 700392 / 26695) (Campylobacter pylori).